Reading from the N-terminus, the 233-residue chain is Large ribosomal subunit protein uL1 (233 aa).

Belongs to the universal ribosomal protein uL1 family. In terms of assembly, part of the 50S ribosomal subunit.

Binds directly to 23S rRNA. The L1 stalk is quite mobile in the ribosome, and is involved in E site tRNA release. Functionally, protein L1 is also a translational repressor protein, it controls the translation of the L11 operon by binding to its mRNA. This is Large ribosomal subunit protein uL1 from Thermotoga sp. (strain RQ2).